The following is a 306-amino-acid chain: MTTDWAEIACEVPAEMVDSLADFLVELTGNGVGIDNLHLDTFSLDTLEDTPLKSVKGYLPLDDSLEEMRIRIEQFLAQTGPSFPGYVYAPPVVTVIRNEDWANNWKVHFKPVRIGQRLVIKPTWEEYLKLEGDLVIQIDPGMAFGTGAHPTTKMCLEALERICFDASGGKLPSPVLDVGTGSGVLSIAAALLGAKEIVAVDIDPEAVRVTMENLELNGVADLVAASTTSLEQLPGGFRVVVANILAEELVRLADELTARVAPGGWLILSGILTEKEAFVCAAFNSLELVENPKELEWSCLSFRKPL.

S-adenosyl-L-methionine-binding residues include Thr-152, Gly-179, Asp-201, and Asn-243.

It belongs to the methyltransferase superfamily. PrmA family.

Its subcellular location is the cytoplasm. It catalyses the reaction L-lysyl-[protein] + 3 S-adenosyl-L-methionine = N(6),N(6),N(6)-trimethyl-L-lysyl-[protein] + 3 S-adenosyl-L-homocysteine + 3 H(+). Methylates ribosomal protein L11. This chain is Ribosomal protein L11 methyltransferase, found in Citrifermentans bemidjiense (strain ATCC BAA-1014 / DSM 16622 / JCM 12645 / Bem) (Geobacter bemidjiensis).